Here is a 198-residue protein sequence, read N- to C-terminus: Recombination protein RecR (198 aa).

The C4-type zinc finger occupies 56–71 (CHVCGNVDTGDPCGIC). The Toprim domain maps to 79-174 (RMLCVVEEVA…RLTQLAHGLP (96 aa)).

Belongs to the RecR family.

In terms of biological role, may play a role in DNA repair. It seems to be involved in an RecBC-independent recombinational process of DNA repair. It may act with RecF and RecO. The polypeptide is Recombination protein RecR (Rhizorhabdus wittichii (strain DSM 6014 / CCUG 31198 / JCM 15750 / NBRC 105917 / EY 4224 / RW1) (Sphingomonas wittichii)).